The following is a 1279-amino-acid chain: ATP-dependent helicase/nuclease subunit A (1279 aa).

The region spanning 4–499 is the UvrD-like helicase ATP-binding domain; the sequence is TKWTDEQRQA…VKLFKNFRSR (496 aa). Position 25-32 (25-32) interacts with ATP; it reads AGAGAGKT. Residues 526 to 853 enclose the UvrD-like helicase C-terminal domain; that stretch reads EEALKVGASY…RIMSIHKSKG (328 aa).

It belongs to the helicase family. AddA subfamily. As to quaternary structure, heterodimer of AddA and AddB/RexB. Mg(2+) serves as cofactor.

The catalysed reaction is Couples ATP hydrolysis with the unwinding of duplex DNA by translocating in the 3'-5' direction.. It carries out the reaction ATP + H2O = ADP + phosphate + H(+). The heterodimer acts as both an ATP-dependent DNA helicase and an ATP-dependent, dual-direction single-stranded exonuclease. Recognizes the chi site generating a DNA molecule suitable for the initiation of homologous recombination. The AddA nuclease domain is required for chi fragment generation; this subunit has the helicase and 3' -&gt; 5' nuclease activities. In Clostridium botulinum (strain ATCC 19397 / Type A), this protein is ATP-dependent helicase/nuclease subunit A.